A 513-amino-acid chain; its full sequence is Maturase K (513 aa).

Belongs to the intron maturase 2 family. MatK subfamily.

Its subcellular location is the plastid. It localises to the chloroplast. Usually encoded in the trnK tRNA gene intron. Probably assists in splicing its own and other chloroplast group II introns. The sequence is that of Maturase K from Molinia caerulea (Purple moor-grass).